The sequence spans 453 residues: Prenyltransferase nscD (453 aa).

Dimethylallyl diphosphate is bound by residues arginine 118, lysine 200, tyrosine 202, lysine 271, tyrosine 273, and tyrosine 428.

This sequence belongs to the tryptophan dimethylallyltransferase family.

The protein operates within secondary metabolite biosynthesis. Functionally, prenyltransferase; part of the gene cluster that mediates the biosynthesis of neosartoricin, a prenylated anthracenone that exhibits T-cell antiproliferative activity, suggestive of a physiological role as an immunosuppressive agent. The non-reducing polyketide synthase nscA probably synthesizes and cyclizes the decaketide backbone. The hydrolase nscB then mediates the product release through hydrolysis followed by spontaneous decarboxylation. The prenyltransferase nscD catalyzes the addition of the dimethylallyl group to the aromatic C5. The FAD-dependent monooxygenase nscC is then responsible for the stereospecific hydroxylation at C2. There is no gene encoding O-acetyltransferase in the nsc gene cluster; thus, the last step of 2-O-acetylation leading to neosartoricin may be catalyzed by an unidentified O-acetyltransferase. The protein is Prenyltransferase nscD of Aspergillus fumigatus (strain ATCC MYA-4609 / CBS 101355 / FGSC A1100 / Af293) (Neosartorya fumigata).